A 261-amino-acid chain; its full sequence is tRNA pseudouridine synthase A (261 aa).

D51 functions as the Nucleophile in the catalytic mechanism. Y109 is a substrate binding site.

Belongs to the tRNA pseudouridine synthase TruA family. In terms of assembly, homodimer.

The enzyme catalyses uridine(38/39/40) in tRNA = pseudouridine(38/39/40) in tRNA. In terms of biological role, formation of pseudouridine at positions 38, 39 and 40 in the anticodon stem and loop of transfer RNAs. This is tRNA pseudouridine synthase A from Shewanella frigidimarina (strain NCIMB 400).